The primary structure comprises 207 residues: Outer-membrane lipoprotein LolB (207 aa).

The first 21 residues, 1–21 (MPMRKRHFYRLLPLASLLLAA), serve as a signal peptide directing secretion. Residue C22 is the site of N-palmitoyl cysteine attachment. C22 carries the S-diacylglycerol cysteine lipid modification.

Belongs to the LolB family. In terms of assembly, monomer.

The protein resides in the cell outer membrane. Its function is as follows. Plays a critical role in the incorporation of lipoproteins in the outer membrane after they are released by the LolA protein. The protein is Outer-membrane lipoprotein LolB of Yersinia pestis bv. Antiqua (strain Antiqua).